The following is a 101-amino-acid chain: Small ribosomal subunit protein uS14 (101 aa).

This sequence belongs to the universal ribosomal protein uS14 family. As to quaternary structure, part of the 30S ribosomal subunit. Contacts proteins S3 and S10.

In terms of biological role, binds 16S rRNA, required for the assembly of 30S particles and may also be responsible for determining the conformation of the 16S rRNA at the A site. The polypeptide is Small ribosomal subunit protein uS14 (Acinetobacter baumannii (strain SDF)).